Reading from the N-terminus, the 401-residue chain is Multidrug resistance protein MdtH (401 aa).

Over 1 to 12 (MSRVSQARNLGK) the chain is Cytoplasmic. A helical membrane pass occupies residues 13 to 33 (YFLLIDNMLVVLGFFVVFPLV). The Periplasmic segment spans residues 34 to 98 (SIRFVDQMGW…GFATMGIAHE (65 aa)). A helical transmembrane segment spans residues 99–116 (PWLLWFSCLLSGLGGTLF). The Cytoplasmic portion of the chain corresponds to 117–137 (DPPRSALVVKLMPQQRGRFFS). The chain crosses the membrane as a helical span at residues 138–158 (LLMMQDSAGAVIGALLGSWLL). Residues 159 to 163 (QYDFR) are Periplasmic-facing. The helical transmembrane segment at 164 to 184 (LVCATGAVLFVLCAAFNAWLL) threads the bilayer. Residues 185–212 (PAWKLSTIRTPVREGMTRVMRDKRFVTY) lie on the Cytoplasmic side of the membrane. The chain crosses the membrane as a helical span at residues 213–233 (VLTLAGYYMLAVQVMLMLPIM). Topologically, residues 234–242 (VNDVAGAPS) are periplasmic. Residues 243 to 263 (AVKWMYAIEACLSLTLLYPIA) traverse the membrane as a helical segment. Residues 264–275 (RWSEKHFRLEHR) lie on the Cytoplasmic side of the membrane. The helical transmembrane segment at 276–296 (LMAGLLIMSLSMMPVGMVSGL) threads the bilayer. At 297–298 (QQ) the chain is on the periplasmic side. A helical membrane pass occupies residues 299 to 319 (LFTLICLFYIGSIIAEPARET). Over 320-338 (LSASLADARARGSYMGFSR) the chain is Cytoplasmic. The chain crosses the membrane as a helical span at residues 339–359 (LGLAIGGTIGYIGGGWLFDLG). Over 360–366 (KSAHQPE) the chain is Periplasmic. Residues 367–387 (LPWMMLGIIGIFTFLALGWQF) form a helical membrane-spanning segment. The Cytoplasmic portion of the chain corresponds to 388–401 (SQKRAARRLLERDA).

The protein belongs to the major facilitator superfamily. DHA1 family. MdtH (TC 2.A.1.2.21) subfamily.

It localises to the cell inner membrane. The protein is Multidrug resistance protein MdtH of Shigella dysenteriae serotype 1 (strain Sd197).